The following is a 558-amino-acid chain: Protein S10 (558 aa).

The interval 539-558 (SSNTSSHEHTQKIVLNKVTR) is disordered.

In Avena sativa (Oat), this protein is Protein S10 (S10).